A 2099-amino-acid polypeptide reads, in one-letter code: Dedicator of cytokinesis protein 8 (2099 aa).

3 positions are modified to phosphoserine: Ser20, Ser139, and Ser451. Residues 560–729 (RNLLYVYPQR…GVFNIEVQAV (170 aa)) enclose the C2 DOCK-type domain. A phosphoserine mark is found at Ser904, Ser936, Ser1145, and Ser1243. The 435-residue stretch at 1632-2066 (KSYQASPDLR…LRPMIERKIP (435 aa)) folds into the DOCKER domain. At Ser2087 the chain carries Phosphoserine.

The protein belongs to the DOCK family. Interacts (via DOCKER domain) with GTPase CDC42; the interaction activates CDC42 by exchanging GDP for GTP. The unphosphorylated form interacts (via DOCKER domain) with LRCH1 (via LRR repeats); the interaction prevents the association between DOCK8 and CDC42. Interacts with CCDC88B. In response to chemokine CXCL12/SDF-1-alpha stimulation, phosphorylated by PRKCA/PKC-alpha which promotes DOCK8 dissociation from LRCH1. In terms of tissue distribution, expressed in peripheral blood mononuclear cells (PBMCs).

Its subcellular location is the cytoplasm. It localises to the cell membrane. The protein resides in the cell projection. The protein localises to the lamellipodium membrane. Functionally, guanine nucleotide exchange factor (GEF) which specifically activates small GTPase CDC42 by exchanging bound GDP for free GTP. During immune responses, required for interstitial dendritic cell (DC) migration by locally activating CDC42 at the leading edge membrane of DC. Required for CD4(+) T-cell migration in response to chemokine stimulation by promoting CDC42 activation at T cell leading edge membrane. Is involved in NK cell cytotoxicity by controlling polarization of microtubule-organizing center (MTOC), and possibly regulating CCDC88B-mediated lytic granule transport to MTOC during cell killing. The polypeptide is Dedicator of cytokinesis protein 8 (DOCK8) (Homo sapiens (Human)).